The chain runs to 512 residues: Bifunctional purine biosynthesis protein PurH (512 aa).

Positions 1 to 150 (MIGEERVVRA…KNFPAVLVLV (150 aa)) constitute an MGS-like domain.

Belongs to the PurH family.

The enzyme catalyses (6R)-10-formyltetrahydrofolate + 5-amino-1-(5-phospho-beta-D-ribosyl)imidazole-4-carboxamide = 5-formamido-1-(5-phospho-D-ribosyl)imidazole-4-carboxamide + (6S)-5,6,7,8-tetrahydrofolate. It catalyses the reaction IMP + H2O = 5-formamido-1-(5-phospho-D-ribosyl)imidazole-4-carboxamide. It participates in purine metabolism; IMP biosynthesis via de novo pathway; 5-formamido-1-(5-phospho-D-ribosyl)imidazole-4-carboxamide from 5-amino-1-(5-phospho-D-ribosyl)imidazole-4-carboxamide (10-formyl THF route): step 1/1. Its pathway is purine metabolism; IMP biosynthesis via de novo pathway; IMP from 5-formamido-1-(5-phospho-D-ribosyl)imidazole-4-carboxamide: step 1/1. This is Bifunctional purine biosynthesis protein PurH from Chloroflexus aurantiacus (strain ATCC 29366 / DSM 635 / J-10-fl).